The chain runs to 336 residues: UDP-3-O-acylglucosamine N-acyltransferase (336 aa).

Residue His237 is the Proton acceptor of the active site.

Belongs to the transferase hexapeptide repeat family. LpxD subfamily. In terms of assembly, homotrimer.

It carries out the reaction a UDP-3-O-[(3R)-3-hydroxyacyl]-alpha-D-glucosamine + a (3R)-hydroxyacyl-[ACP] = a UDP-2-N,3-O-bis[(3R)-3-hydroxyacyl]-alpha-D-glucosamine + holo-[ACP] + H(+). The protein operates within bacterial outer membrane biogenesis; LPS lipid A biosynthesis. Its function is as follows. Catalyzes the N-acylation of UDP-3-O-acylglucosamine using 3-hydroxyacyl-ACP as the acyl donor. Is involved in the biosynthesis of lipid A, a phosphorylated glycolipid that anchors the lipopolysaccharide to the outer membrane of the cell. In Alcanivorax borkumensis (strain ATCC 700651 / DSM 11573 / NCIMB 13689 / SK2), this protein is UDP-3-O-acylglucosamine N-acyltransferase.